The primary structure comprises 840 residues: Protein translocase subunit SecA (840 aa).

Residues Gln87, 105 to 109 (GEGKT), and Asp494 contribute to the ATP site. A disordered region spans residues 518–537 (RRIDNQLRGRSGRQGDPGSS). Zn(2+) contacts are provided by Cys826, Cys828, Cys837, and Cys838.

Belongs to the SecA family. As to quaternary structure, monomer and homodimer. Part of the essential Sec protein translocation apparatus which comprises SecA, SecYEG and auxiliary proteins SecDF-YajC and YidC. Requires Zn(2+) as cofactor.

The protein localises to the cell inner membrane. Its subcellular location is the cytoplasm. It carries out the reaction ATP + H2O + cellular proteinSide 1 = ADP + phosphate + cellular proteinSide 2.. Functionally, part of the Sec protein translocase complex. Interacts with the SecYEG preprotein conducting channel. Has a central role in coupling the hydrolysis of ATP to the transfer of proteins into and across the cell membrane, serving as an ATP-driven molecular motor driving the stepwise translocation of polypeptide chains across the membrane. The polypeptide is Protein translocase subunit SecA (Desulforapulum autotrophicum (strain ATCC 43914 / DSM 3382 / VKM B-1955 / HRM2) (Desulfobacterium autotrophicum)).